A 427-amino-acid polypeptide reads, in one-letter code: MNKLIISLLIVLSAISIISADYQYGYCKFGSVGTVNQNITGYVTLTAQDGALNLVYNISSINLPTGSYATAIMTYGYNPSNNTDLGGVFQVDGKGTEQCQSGGSRAGDLYNLYVNDNRISSNFDSLTSVSIVDSPNSIIGRSIAIFQESYSCDLLKSSVGTSVGPLTTVVASCIIGIGNSANVPATNGVNTTTGNANTAGAYSSLSNTQYDAMVLLANTTKSPSAAIGGSVLFRSSSNSVSVNGIVSGVAKSVHGFHIHAFGDLTTVDGASIGGHWLSGAQVHAFPENTSRHFGDLGNLCIFDNDFKNAYYYLSTSYFSFSGLVGRGFAVHAARDDGNTYVGGDRVAQGVVALIPKAATTLNQVPSNWKYEVICSNGTYTGESTIEPSPTPSTTPTPTETSQPGTSSYLAPFFVLILSSLISVILIL.

The signal sequence occupies residues 1–20 (MNKLIISLLIVLSAISIISA). Residues 21–406 (DYQYGYCKFG…PTETSQPGTS (386 aa)) lie on the Extracellular side of the membrane. 5 N-linked (GlcNAc...) asparagine glycosylation sites follow: asparagine 38, asparagine 57, asparagine 81, asparagine 190, and asparagine 218. 3 residues coordinate Cu cation: histidine 257, histidine 259, and histidine 275. 2 residues coordinate Zn(2+): histidine 275 and histidine 283. Residue asparagine 288 is glycosylated (N-linked (GlcNAc...) asparagine). Histidine 292 and aspartate 295 together coordinate Zn(2+). A Cu cation-binding site is contributed by histidine 331. An N-linked (GlcNAc...) asparagine glycan is attached at asparagine 376. The tract at residues 381 to 404 (GESTIEPSPTPSTTPTPTETSQPG) is disordered. Residues 395–404 (PTPTETSQPG) are compositionally biased toward low complexity. A helical transmembrane segment spans residues 407-426 (SYLAPFFVLILSSLISVILI). Leucine 427 is a topological domain (cytoplasmic).

The protein belongs to the Cu-Zn superoxide dismutase family. Requires Cu cation as cofactor. Zn(2+) is required as a cofactor.

The protein resides in the cell membrane. The catalysed reaction is 2 superoxide + 2 H(+) = H2O2 + O2. Its function is as follows. Protect the extracellular space from toxic effect of reactive oxygen intermediates by converting superoxyde radicals into hydrogen peroxyde and oxygen. The chain is Extracellular superoxide dismutase [Cu-Zn] 2 (sodB) from Dictyostelium discoideum (Social amoeba).